Reading from the N-terminus, the 183-residue chain is CyanoP (183 aa).

The N-terminal stretch at 1-19 (MLQRFFATALAIFVVLLGG) is a signal peptide. The N-palmitoyl cysteine moiety is linked to residue Cys20. Residue Cys20 is the site of S-diacylglycerol cysteine attachment. Zn(2+)-binding residues include Asp31, Asp34, Asp54, His58, Thr63, Glu87, Asp91, His142, Glu163, and Glu164.

This sequence belongs to the PsbP family. CyanoP subfamily. As to quaternary structure, monomer. Present in very small amounts in PSII. It depends on Zn(2+) as a cofactor.

The protein localises to the cellular thylakoid membrane. Its function is as follows. Plays a role in the early stages of photosystem II (PSII) assembly; binds to D2 (psbD) and may facilitate its incorporation into PSII. Present in less than 1% of PSII preparations. This chain is CyanoP, found in Thermosynechococcus vestitus (strain NIES-2133 / IAM M-273 / BP-1).